Consider the following 659-residue polypeptide: tRNA 5-methylaminomethyl-2-thiouridine biosynthesis bifunctional protein MnmC (659 aa).

Positions 1–236 (MKPVMPHAQL…KWEILRGEFL (236 aa)) are tRNA (mnm(5)s(2)U34)-methyltransferase. The FAD-dependent cmnm(5)s(2)U34 oxidoreductase stretch occupies residues 267–659 (IGAGLAGCAT…FALRRLIRGK (393 aa)).

The protein in the N-terminal section; belongs to the methyltransferase superfamily. tRNA (mnm(5)s(2)U34)-methyltransferase family. It in the C-terminal section; belongs to the DAO family. The cofactor is FAD.

It is found in the cytoplasm. It catalyses the reaction 5-aminomethyl-2-thiouridine(34) in tRNA + S-adenosyl-L-methionine = 5-methylaminomethyl-2-thiouridine(34) in tRNA + S-adenosyl-L-homocysteine + H(+). Functionally, catalyzes the last two steps in the biosynthesis of 5-methylaminomethyl-2-thiouridine (mnm(5)s(2)U) at the wobble position (U34) in tRNA. Catalyzes the FAD-dependent demodification of cmnm(5)s(2)U34 to nm(5)s(2)U34, followed by the transfer of a methyl group from S-adenosyl-L-methionine to nm(5)s(2)U34, to form mnm(5)s(2)U34. This is tRNA 5-methylaminomethyl-2-thiouridine biosynthesis bifunctional protein MnmC from Pseudomonas fluorescens (strain Pf0-1).